The sequence spans 91 residues: Large ribosomal subunit protein uL23 (91 aa).

The protein belongs to the universal ribosomal protein uL23 family. Part of the 50S ribosomal subunit. Contacts protein L29, and trigger factor when it is bound to the ribosome.

Functionally, one of the early assembly proteins it binds 23S rRNA. One of the proteins that surrounds the polypeptide exit tunnel on the outside of the ribosome. Forms the main docking site for trigger factor binding to the ribosome. This Staphylococcus epidermidis (strain ATCC 35984 / DSM 28319 / BCRC 17069 / CCUG 31568 / BM 3577 / RP62A) protein is Large ribosomal subunit protein uL23.